The following is a 530-amino-acid chain: Fusaric acid resistance protein FusA (530 aa).

Positions methionine 1 to glycine 23 are cleaved as a signal peptide. Cysteine 24 carries N-palmitoyl cysteine lipidation. Cysteine 24 is lipidated: S-diacylglycerol cysteine. 2 disordered regions span residues asparagine 375–alanine 442 and glycine 476–arginine 530. Low complexity-rich tracts occupy residues arginine 421–arginine 430 and alanine 494–arginine 530.

This sequence belongs to the outer membrane factor (OMF) (TC 1.B.17) family.

It localises to the cell membrane. Functionally, involved in the resistance (detoxification) of the fungal toxin fusaric acid. This is Fusaric acid resistance protein FusA (fusA) from Burkholderia cepacia (Pseudomonas cepacia).